Reading from the N-terminus, the 232-residue chain is MWSQSFLGSAPKLCLFSSSLPPFSHHKIHKFFCFAQNPSSTVSINLSKRHLNLSILTLFFNGFLLDNKAKSMEELQRYTDSNNGFTLLIPSSYTKVEKAGANALFEELNNGSNNIGVVVSPVRIKSLDQFGSPQFVADKLINAEKRKESTKEAEVVSVGERAGLGQQVYEFEYKIDSTRGGIKRVFSAAFVSSNKLYLLNVVHSDKPENPLDSSTRMSLEQVLHSFDALPLT.

Residues 1–34 (MWSQSFLGSAPKLCLFSSSLPPFSHHKIHKFFCF) constitute a chloroplast transit peptide. The N-terminal 37 residues, 35 to 71 (AQNPSSTVSINLSKRHLNLSILTLFFNGFLLDNKAKS), are a transit peptide targeting the thylakoid.

It belongs to the PsbP family.

The protein localises to the plastid. The protein resides in the chloroplast thylakoid lumen. The polypeptide is PsbP domain-containing protein 2, chloroplastic (PPD2) (Arabidopsis thaliana (Mouse-ear cress)).